Here is a 363-residue protein sequence, read N- to C-terminus: Nicotinamide adenine dinucleotide transporter 2, mitochondrial (363 aa).

Solcar repeat units follow at residues 15-107, 115-203, and 215-305; these read REVA…LKDV, LSIG…IKQY, and LSPG…MLRF. 6 helical membrane passes run 21–41, 82–102, 121–141, 176–196, 215–235, and 277–299; these read AGAG…LDVI, GLSP…SVYG, MIAA…LWVV, LYSG…QFPA, LSPG…SILT, and LYRG…FTTY. The interval 313–363 is disordered; it reads ETNRSDDRRREEERKNLVSRRGEEEDKDLGLRESQTQSNKISTPHIPLGSK. Positions 315–343 are enriched in basic and acidic residues; sequence NRSDDRRREEERKNLVSRRGEEEDKDLGL. Residues 345 to 354 show a composition bias toward polar residues; it reads ESQTQSNKIS.

Belongs to the mitochondrial carrier (TC 2.A.29) family. In terms of tissue distribution, highly expressed in young meristematic shoot area, vascular bundles of leaves, developing siliques including the funiculi, petal veins, developing pollen and central cylinder of roots.

It localises to the mitochondrion membrane. With respect to regulation, inhibited by pyridoxal 5'-phosphate, bathophenanthroline, tannic acid, mersalyl, mercuric chloride, p-hydroxymercuribenzoate, p-hydroxymercuribenzoate sulfonate, bromocresol purple and N-ethylmaleimide. Its function is as follows. Mediates the NAD(+) import into chloroplast. Favors the NAD(+)(in)/ADP or AMP(out) antiport exchange, but is also able to catalyze a low unidirectional transport (uniport) of NAD(+). Transports NAD(+), nicotinic acid adenine dinucleotide, nicotinamide mononucleotide, nicotinic acid mononucleotide, FAD, FMN, TTP, TDP, TMP, UTP, UDP, UMP, CTP, CDP, CMP, GTP, GDP, GMP, 3'-AMP, ATP, ADP and AMP, has low transport activity with cAMP, NADH and alpha-NAD(+), and has no activity with NADP(+), NADPH, nicotinamide, nicotinic acid, adenosine, thiamine mono- or diphosphate, inorganic phosphate, CoA, folate, NaCl, malate, malonate, citrate, fumarate, aspartate, glutamate, S-adenosylmethionine, lysine, arginine, and ornithine. The protein is Nicotinamide adenine dinucleotide transporter 2, mitochondrial (NDT2) of Arabidopsis thaliana (Mouse-ear cress).